The sequence spans 123 residues: Histone H2B (123 aa).

The segment at 1–32 is disordered; that stretch reads MAPKAPGKGAKKAAKSKAPRAPGDRKRKRTRR. Residues 9-18 show a composition bias toward basic residues; the sequence is GAKKAAKSKA. Ser110 carries an O-linked (GlcNAc) serine glycan. Residue Lys118 forms a Glycyl lysine isopeptide (Lys-Gly) (interchain with G-Cter in ubiquitin) linkage.

It belongs to the histone H2B family. In terms of assembly, the nucleosome is a histone octamer containing two molecules each of H2A, H2B, H3 and H4 assembled in one H3-H4 heterotetramer and two H2A-H2B heterodimers. The octamer wraps approximately 147 bp of DNA. Post-translationally, monoubiquitination of Lys-118 gives a specific tag for epigenetic transcriptional activation and is also prerequisite for histone H3 'Lys-4' and 'Lys-79' methylation. In terms of processing, glcNAcylation at Ser-110 promotes monoubiquitination of Lys-118. It fluctuates in response to extracellular glucose, and associates with transcribed genes.

It localises to the nucleus. The protein resides in the chromosome. Its function is as follows. Core component of nucleosome. Nucleosomes wrap and compact DNA into chromatin, limiting DNA accessibility to the cellular machineries which require DNA as a template. Histones thereby play a central role in transcription regulation, DNA repair, DNA replication and chromosomal stability. DNA accessibility is regulated via a complex set of post-translational modifications of histones, also called histone code, and nucleosome remodeling. In Holothuria tubulosa (Tubular sea cucumber), this protein is Histone H2B.